An 84-amino-acid chain; its full sequence is Sulfur carrier protein TusA (84 aa).

C21 acts as the Cysteine persulfide intermediate in catalysis.

The protein belongs to the sulfur carrier protein TusA family.

It localises to the cytoplasm. Sulfur carrier protein which probably makes part of a sulfur-relay system. The chain is Sulfur carrier protein TusA from Pseudomonas syringae pv. syringae (strain B728a).